The sequence spans 315 residues: MLEIEKPVIQCVESNDNGTYGKFEIEPLERGYGITLGNALRRILLSSLPGVAPTSVKIDSVLHEFSTITGVKEDVTEIILNLKMLALTMEGEGPKTIYIDAQGPGVVTGADIKTDGDVEVVNKDLHIATLDNDGKLYMEIVVNRGRGYVTQNKNKTEDLPLSAIAIDSIYTPVKRVNFSVQNTRVGQITDYDKLTLEIWTNGTIRIEEAISLSAKILIEHFKLFMTLTDNANDVEIMIEKEEDKKEKALEMTIEELDLSVRSYNCLKRAGINTVQELAGKSMDDMMKVRNLGKKSLEEVERKLNELGLNLRLNDE.

Positions 1 to 228 (MLEIEKPVIQ…EHFKLFMTLT (228 aa)) are alpha N-terminal domain (alpha-NTD). An alpha C-terminal domain (alpha-CTD) region spans residues 245-315 (KEKALEMTIE…LGLNLRLNDE (71 aa)).

Belongs to the RNA polymerase alpha chain family. Homodimer. The RNAP catalytic core consists of 2 alpha, 1 beta, 1 beta' and 1 omega subunit. When a sigma factor is associated with the core the holoenzyme is formed, which can initiate transcription.

It carries out the reaction RNA(n) + a ribonucleoside 5'-triphosphate = RNA(n+1) + diphosphate. Its function is as follows. DNA-dependent RNA polymerase catalyzes the transcription of DNA into RNA using the four ribonucleoside triphosphates as substrates. This is DNA-directed RNA polymerase subunit alpha from Clostridium perfringens (strain ATCC 13124 / DSM 756 / JCM 1290 / NCIMB 6125 / NCTC 8237 / Type A).